The chain runs to 165 residues: Nucleoside-triphosphatase THEP1 (165 aa).

ATP contacts are provided by residues 7-14 (GRPGVGKT) and 93-100 (LVIIDEVG).

This sequence belongs to the THEP1 NTPase family.

The catalysed reaction is a ribonucleoside 5'-triphosphate + H2O = a ribonucleoside 5'-diphosphate + phosphate + H(+). In terms of biological role, has nucleotide phosphatase activity towards ATP, GTP, CTP, TTP and UTP. May hydrolyze nucleoside diphosphates with lower efficiency. The chain is Nucleoside-triphosphatase THEP1 from Archaeoglobus fulgidus (strain ATCC 49558 / DSM 4304 / JCM 9628 / NBRC 100126 / VC-16).